The chain runs to 1123 residues: Phytochrome A (1123 aa).

The segment covering 1 to 14 (MSSSRPSQSSTTSS) has biased composition (low complexity). Residues 1-20 (MSSSRPSQSSTTSSRSKHSA) are disordered. Residues 218-401 (SMERLCDTMV…VFAILVNKEL (184 aa)) enclose the GAF domain. Phytochromobilin is bound at residue Cys-323. The PAS 1 domain maps to 617–687 (VTAEMVRLIE…KMLELALQGQ (71 aa)). One can recognise a PAC domain in the interval 690–746 (RNVEFEIKTHGPSRDSSPISLIVNACASKDVRDSVVGVCFIAQDITGQKSIMDKFTR). The region spanning 747-821 (IEGDYRAIIQ…KNQEAFVNFG (75 aa)) is the PAS 2 domain. One can recognise a Histidine kinase domain in the interval 901-1118 (YIRRQIRNPL…TFIISVELAV (218 aa)).

The protein belongs to the phytochrome family. As to quaternary structure, homodimer. In terms of processing, contains one covalently linked phytochromobilin chromophore.

Its function is as follows. Regulatory photoreceptor which exists in two forms that are reversibly interconvertible by light: the Pr form that absorbs maximally in the red region of the spectrum and the Pfr form that absorbs maximally in the far-red region. Photoconversion of Pr to Pfr induces an array of morphogenic responses, whereas reconversion of Pfr to Pr cancels the induction of those responses. Pfr controls the expression of a number of nuclear genes including those encoding the small subunit of ribulose-bisphosphate carboxylase, chlorophyll A/B binding protein, protochlorophyllide reductase, rRNA, etc. It also controls the expression of its own gene(s) in a negative feedback fashion. This is Phytochrome A (PHYA) from Solanum tuberosum (Potato).